We begin with the raw amino-acid sequence, 203 residues long: Dephospho-CoA kinase (203 aa).

A DPCK domain is found at 6–203; that stretch reads KVAITGGLSC…ELYQELKIYI (198 aa). Position 14 to 19 (14 to 19) interacts with ATP; it reads SCGKSS.

This sequence belongs to the CoaE family.

The protein localises to the cytoplasm. It carries out the reaction 3'-dephospho-CoA + ATP = ADP + CoA + H(+). It participates in cofactor biosynthesis; coenzyme A biosynthesis; CoA from (R)-pantothenate: step 5/5. Its function is as follows. Catalyzes the phosphorylation of the 3'-hydroxyl group of dephosphocoenzyme A to form coenzyme A. The protein is Dephospho-CoA kinase of Protochlamydia amoebophila (strain UWE25).